A 128-amino-acid chain; its full sequence is Fluoride-specific ion channel FluC (128 aa).

Transmembrane regions (helical) follow at residues 5–25 (ALVALGSAIGGTLRYWLSMVI), 32–52 (TFPWATLVINVAGSAAIGLFA), 70–90 (FFMVGICGGFTTFSSFSLQTL), and 106–126 (VGSVALCLLAVWLGHVAATII). Glycine 77 and threonine 80 together coordinate Na(+).

Belongs to the fluoride channel Fluc/FEX (TC 1.A.43) family.

It is found in the cell inner membrane. The catalysed reaction is fluoride(in) = fluoride(out). Its activity is regulated as follows. Na(+) is not transported, but it plays an essential structural role and its presence is essential for fluoride channel function. Its function is as follows. Fluoride-specific ion channel. Important for reducing fluoride concentration in the cell, thus reducing its toxicity. This Paramagnetospirillum magneticum (strain ATCC 700264 / AMB-1) (Magnetospirillum magneticum) protein is Fluoride-specific ion channel FluC.